The following is a 307-amino-acid chain: Protease HtpX homolog 1 (307 aa).

2 helical membrane passes run 7–27 and 38–60; these read LKTL…IITY and IFTA…YLVG. Zn(2+) is bound at residue His133. Residue Glu134 is part of the active site. His137 lines the Zn(2+) pocket. The next 2 helical transmembrane spans lie at 145 to 165 and 180 to 200; these read IGMA…FLLF and LILG…TFLL. Glu212 is a Zn(2+) binding site.

This sequence belongs to the peptidase M48B family. Requires Zn(2+) as cofactor.

It localises to the cell membrane. This chain is Protease HtpX homolog 1, found in Sulfolobus acidocaldarius (strain ATCC 33909 / DSM 639 / JCM 8929 / NBRC 15157 / NCIMB 11770).